Reading from the N-terminus, the 333-residue chain is Gamma-D-glutamyl-L-lysine dipeptidyl-peptidase (333 aa).

Positions 1–23 (MKKVGTAFLTTLFIFSSFTSAHA) are cleaved as a signal peptide. Substrate-binding positions include E83, Y118, 237–239 (DCS), and 256–257 (DS). The region spanning 208–332 (TPAADDLINT…EEYAGARRYL (125 aa)) is the NlpC/P60 domain. The Nucleophile role is filled by C238. H291 (proton acceptor) is an active-site residue. H303 is an active-site residue.

The protein belongs to the peptidase C40 family. In terms of assembly, monomer in solution.

It carries out the reaction The enzyme releases L-Ala-gamma-D-Glu dipeptides from cell wall peptides via cleavage of an L-Ala-gamma-D-Glu-|-L-Lys bond.. It participates in cell wall degradation; peptidoglycan degradation. In terms of biological role, specifically hydrolyzes gamma-D-glutamyl-L-lysine bonds in murein peptides, releasing L-Ala-D-Glu. The chain is Gamma-D-glutamyl-L-lysine dipeptidyl-peptidase from Bacillus cereus (strain ATCC 10987 / NRS 248).